We begin with the raw amino-acid sequence, 273 residues long: tRNA (guanine-N(7)-)-methyltransferase A (273 aa).

S-adenosyl-L-methionine is bound by residues G86, E109, R111, N142, A143, and L162. The active site involves D165. Residues P166–K174 form an alphaC helix region. S-adenosyl-L-methionine-binding residues include T240 and E242. The tract at residues T240–R248 is alpha6 helix.

The protein belongs to the class I-like SAM-binding methyltransferase superfamily. TrmB family. As to quaternary structure, catalytic component of the METTL1-WDR4 complex, composed of mettl1 and wdr4.

The protein resides in the nucleus. It catalyses the reaction guanosine(46) in tRNA + S-adenosyl-L-methionine = N(7)-methylguanosine(46) in tRNA + S-adenosyl-L-homocysteine. The catalysed reaction is a guanosine in mRNA + S-adenosyl-L-methionine = an N(7)-methylguanosine in mRNA + S-adenosyl-L-homocysteine. It carries out the reaction a guanosine in miRNA + S-adenosyl-L-methionine = an N(7)-methylguanosine in miRNA + S-adenosyl-L-homocysteine. Its pathway is tRNA modification; N(7)-methylguanine-tRNA biosynthesis. Catalytic component of METTL1-WDR4 methyltransferase complex that mediates the formation of N(7)-methylguanine in a subset of RNA species, such as tRNAs, mRNAs and microRNAs (miRNAs). Catalyzes the formation of N(7)-methylguanine at position 46 (m7G46) in a large subset of tRNAs that contain the 5'-RAGGU-3' motif within the variable loop. M7G46 interacts with C13-G22 in the D-loop to stabilize tRNA tertiary structure and protect tRNAs from decay. Also acts as a methyltransferase for a subset of internal N(7)-methylguanine in mRNAs. Internal N(7)-methylguanine methylation of mRNAs in response to stress promotes their relocalization to stress granules, thereby suppressing their translation. Also methylates a specific subset of miRNAs. This chain is tRNA (guanine-N(7)-)-methyltransferase A (mettl1-A), found in Xenopus tropicalis (Western clawed frog).